A 571-amino-acid chain; its full sequence is Vesicle-associated protein 1-4 (571 aa).

The region spanning 1–126 (MSTDELLTFD…EETIFKIIYV (126 aa)) is the MSP 1 domain. A disordered region spans residues 132–154 (QSPVQEGLEDGSSPSASVSDKGN). Positions 143–153 (SSPSASVSDKG) are enriched in polar residues. The 121-residue stretch at 176 to 296 (LLIIDPVDVQ…EETRLKVMYV (121 aa)) folds into the MSP 2 domain. A disordered region spans residues 297-322 (TPPQPPSPVQEGTEEGSSPRASVSDN). Over residues 311–322 (EGSSPRASVSDN) the composition is skewed to polar residues. The region spanning 356-493 (PQYQVFINFR…KWKEALSSVF (138 aa)) is the TIR domain. The active site involves glutamate 430.

It belongs to the VAMP-associated protein (VAP) (TC 9.B.17) family.

The catalysed reaction is NAD(+) + H2O = ADP-D-ribose + nicotinamide + H(+). Its function is as follows. May play a role in vesicle trafficking. This chain is Vesicle-associated protein 1-4 (PVA14), found in Arabidopsis thaliana (Mouse-ear cress).